The chain runs to 161 residues: DNA-directed RNA polymerase III subunit RPC9 (161 aa).

The interval 75–96 (QEDEGEERESSGAKDAEKSGIS) is disordered. Basic and acidic residues predominate over residues 82–96 (RESSGAKDAEKSGIS).

It belongs to the eukaryotic RPC9 RNA polymerase subunit family. Component of the RNA polymerase III (Pol III) complex consisting of 17 subunits. Forms a Pol III subcomplex with RPC25/RPC8. Interacts with BURF1/TDS4.

The protein localises to the nucleus. Its function is as follows. DNA-dependent RNA polymerase catalyzes the transcription of DNA into RNA using the four ribonucleoside triphosphates as substrates. Specific peripheric component of RNA polymerase III which synthesizes small RNAs, such as 5S rRNA and tRNAs. The RPC25/RPC8-RPC17/RPC9 subcomplex may bind Pol III transcripts emerging from the adjacent exit pore during elongation. The chain is DNA-directed RNA polymerase III subunit RPC9 (RPC17) from Saccharomyces cerevisiae (strain ATCC 204508 / S288c) (Baker's yeast).